The sequence spans 84 residues: Small ribosomal subunit protein bS16 (84 aa).

The protein belongs to the bacterial ribosomal protein bS16 family.

This Cupriavidus necator (strain ATCC 17699 / DSM 428 / KCTC 22496 / NCIMB 10442 / H16 / Stanier 337) (Ralstonia eutropha) protein is Small ribosomal subunit protein bS16.